Consider the following 30-residue polypeptide: Phospholemman-like protein (30 aa).

Belongs to the FXYD family. In terms of processing, phosphorylated by protein kinase a (PK-A) and protein kinase C (PK-C). Phosphorylated in response to insulin and adrenergic stimulation.

Its subcellular location is the microsome membrane. The protein localises to the endoplasmic reticulum membrane. Functionally, induces a hyperpolarization-activated chloride current when expressed in Xenopus oocytes. May have a functional role in muscle contraction. The chain is Phospholemman-like protein from Squalus acanthias (Spiny dogfish).